The primary structure comprises 241 residues: Sugar fermentation stimulation protein homolog (241 aa).

This sequence belongs to the SfsA family.

In Nostoc punctiforme (strain ATCC 29133 / PCC 73102), this protein is Sugar fermentation stimulation protein homolog.